The primary structure comprises 261 residues: Probable cyclic nucleotide phosphodiesterase PSM_A2567 (261 aa).

Fe cation-binding residues include D22, H24, D62, N94, H160, H198, and H200. Residues H24, D62, and 94–95 (NH) each bind AMP. H200 lines the AMP pocket.

It belongs to the cyclic nucleotide phosphodiesterase class-III family. It depends on Fe(2+) as a cofactor.

This is Probable cyclic nucleotide phosphodiesterase PSM_A2567 from Pseudoalteromonas sp. (strain SM9913).